Reading from the N-terminus, the 478-residue chain is Protein nucleotidyltransferase YdiU (478 aa).

Positions 84, 86, 87, 107, 119, 120, 170, and 177 each coordinate ATP. Catalysis depends on D246, which acts as the Proton acceptor. Residues N247 and D256 each coordinate Mg(2+). Residue D256 coordinates ATP.

The protein belongs to the SELO family. Mg(2+) is required as a cofactor. It depends on Mn(2+) as a cofactor.

The catalysed reaction is L-seryl-[protein] + ATP = 3-O-(5'-adenylyl)-L-seryl-[protein] + diphosphate. It carries out the reaction L-threonyl-[protein] + ATP = 3-O-(5'-adenylyl)-L-threonyl-[protein] + diphosphate. It catalyses the reaction L-tyrosyl-[protein] + ATP = O-(5'-adenylyl)-L-tyrosyl-[protein] + diphosphate. The enzyme catalyses L-histidyl-[protein] + UTP = N(tele)-(5'-uridylyl)-L-histidyl-[protein] + diphosphate. The catalysed reaction is L-seryl-[protein] + UTP = O-(5'-uridylyl)-L-seryl-[protein] + diphosphate. It carries out the reaction L-tyrosyl-[protein] + UTP = O-(5'-uridylyl)-L-tyrosyl-[protein] + diphosphate. Its function is as follows. Nucleotidyltransferase involved in the post-translational modification of proteins. It can catalyze the addition of adenosine monophosphate (AMP) or uridine monophosphate (UMP) to a protein, resulting in modifications known as AMPylation and UMPylation. The sequence is that of Protein nucleotidyltransferase YdiU from Escherichia coli O127:H6 (strain E2348/69 / EPEC).